We begin with the raw amino-acid sequence, 227 residues long: 6-phosphogluconolactonase (227 aa).

This sequence belongs to the glucosamine/galactosamine-6-phosphate isomerase family. 6-phosphogluconolactonase subfamily.

The enzyme catalyses 6-phospho-D-glucono-1,5-lactone + H2O = 6-phospho-D-gluconate + H(+). The protein operates within carbohydrate degradation; pentose phosphate pathway; D-ribulose 5-phosphate from D-glucose 6-phosphate (oxidative stage): step 2/3. In terms of biological role, hydrolysis of 6-phosphogluconolactone to 6-phosphogluconate. This chain is 6-phosphogluconolactonase (pgl), found in Helicobacter pylori (strain J99 / ATCC 700824) (Campylobacter pylori J99).